Consider the following 426-residue polypeptide: 3-phosphoshikimate 1-carboxyvinyltransferase (426 aa).

Positions 22, 23, and 27 each coordinate 3-phosphoshikimate. Lys-22 contributes to the phosphoenolpyruvate binding site. Phosphoenolpyruvate is bound by residues Gly-96 and Arg-124. 3-phosphoshikimate contacts are provided by Ser-170 and Ser-171. Residue Gln-172 participates in phosphoenolpyruvate binding. Positions 198, 314, 337, and 341 each coordinate 3-phosphoshikimate. Residue Asp-314 is the Proton acceptor of the active site. Residues Arg-345, Arg-387, and Lys-412 each contribute to the phosphoenolpyruvate site.

The protein belongs to the EPSP synthase family. Homotetramer.

It localises to the cytoplasm. It carries out the reaction 3-phosphoshikimate + phosphoenolpyruvate = 5-O-(1-carboxyvinyl)-3-phosphoshikimate + phosphate. Its pathway is metabolic intermediate biosynthesis; chorismate biosynthesis; chorismate from D-erythrose 4-phosphate and phosphoenolpyruvate: step 6/7. Catalyzes the transfer of the enolpyruvyl moiety of phosphoenolpyruvate (PEP) to the 5-hydroxyl of shikimate-3-phosphate (S3P) to produce enolpyruvyl shikimate-3-phosphate and inorganic phosphate. The polypeptide is 3-phosphoshikimate 1-carboxyvinyltransferase (Vibrio cholerae serotype O1 (strain ATCC 39315 / El Tor Inaba N16961)).